Consider the following 1246-residue polypeptide: Myosin-1 (1246 aa).

Positions Met-1–Ala-41 are disordered. In terms of domain architecture, Myosin motor spans Ile-51–Asp-730. Gly-144–Thr-151 contacts ATP. Ser-372 is subject to Phosphoserine. The segment at Ser-419–Ala-501 is actin-binding. IQ domains follow at residues His-734–Cys-754 and Ala-755–Lys-780. One can recognise a TH1 domain in the interval Arg-788–Pro-976. A compositionally biased stretch (polar residues) spans Gly-956 to Thr-970. Disordered stretches follow at residues Gly-956–Pro-1080 and Trp-1127–Trp-1246. Composition is skewed to pro residues over residues Ala-1033 to Gln-1045 and Ala-1065 to Lys-1078. The 62-residue stretch at Pro-1077–Ala-1138 folds into the SH3 domain. 2 stretches are compositionally biased toward low complexity: residues Thr-1151–Lys-1166 and Asn-1214–Ala-1228. Residues Leu-1229 to Gln-1240 show a composition bias toward basic and acidic residues.

It belongs to the TRAFAC class myosin-kinesin ATPase superfamily. Myosin family. In terms of processing, phosphorylation of the TEDS site (Ser-372) is required for the polarization of the actin cytoskeleton. Phosphorylation probably activates the myosin-I ATPase activity.

Its subcellular location is the cytoplasm. The protein localises to the cytoskeleton. It is found in the actin patch. Its function is as follows. Type-I myosin implicated in the organization of the actin cytoskeleton. Required for proper actin cytoskeleton polarization. At the cell cortex, assembles in patch-like structures together with proteins from the actin-polymerizing machinery and promotes actin assembly. Functions as actin nucleation-promoting factor (NPF) for the Arp2/3 complex. Plays an important role in polarized growth, spore germination, hyphal morphogenesis, and septal wall formation. This is Myosin-1 (myoA) from Aspergillus terreus (strain NIH 2624 / FGSC A1156).